Here is a 240-residue protein sequence, read N- to C-terminus: Probable septum site-determining protein MinC (240 aa).

The protein belongs to the MinC family. In terms of assembly, interacts with MinD and FtsZ.

Cell division inhibitor that blocks the formation of polar Z ring septums. Rapidly oscillates between the poles of the cell to destabilize FtsZ filaments that have formed before they mature into polar Z rings. Prevents FtsZ polymerization. This chain is Probable septum site-determining protein MinC, found in Buchnera aphidicola subsp. Cinara cedri (strain Cc).